The primary structure comprises 409 residues: uncharacterized protein (409 aa).

The 105-residue stretch at 305–409 (LTKIDEKVVK…LIGEDDELEM (105 aa)) folds into the HTH arsR-type domain.

This is an uncharacterized protein from Methanocaldococcus jannaschii (strain ATCC 43067 / DSM 2661 / JAL-1 / JCM 10045 / NBRC 100440) (Methanococcus jannaschii).